Consider the following 1032-residue polypeptide: uncharacterized protein (1032 aa).

Disordered regions lie at residues 54-80 (NNNNNNNNNNNNNNNNNNNNNNNNNNN), 391-451 (QLQI…QTHL), and 884-934 (INNE…SKVK). Low complexity predominate over residues 884–907 (INNENNNENNNNYNGNINSNNNNN).

This is an uncharacterized protein from Dictyostelium discoideum (Social amoeba).